The primary structure comprises 232 residues: Large ribosomal subunit protein uL1 (232 aa).

This sequence belongs to the universal ribosomal protein uL1 family. Part of the 50S ribosomal subunit.

Functionally, binds directly to 23S rRNA. The L1 stalk is quite mobile in the ribosome, and is involved in E site tRNA release. Protein L1 is also a translational repressor protein, it controls the translation of the L11 operon by binding to its mRNA. The polypeptide is Large ribosomal subunit protein uL1 (Burkholderia ambifaria (strain MC40-6)).